We begin with the raw amino-acid sequence, 92 residues long: Small ribosomal subunit protein uS19 (92 aa).

It belongs to the universal ribosomal protein uS19 family.

Its function is as follows. Protein S19 forms a complex with S13 that binds strongly to the 16S ribosomal RNA. The polypeptide is Small ribosomal subunit protein uS19 (Nostoc punctiforme (strain ATCC 29133 / PCC 73102)).